A 164-amino-acid polypeptide reads, in one-letter code: Large ribosomal subunit protein bL21 (164 aa).

A disordered region spans residues 105 to 164 (KAPTIGPRAKKEKKVEAAPADGEAPAKKAPAKKAAAKKAAPKAAAKKAPAKKAAPKAKSE). Basic residues predominate over residues 133–164 (APAKKAAAKKAAPKAAAKKAPAKKAAPKAKSE).

Belongs to the bacterial ribosomal protein bL21 family. Part of the 50S ribosomal subunit. Contacts protein L20.

In terms of biological role, this protein binds to 23S rRNA in the presence of protein L20. In Afipia carboxidovorans (strain ATCC 49405 / DSM 1227 / KCTC 32145 / OM5) (Oligotropha carboxidovorans), this protein is Large ribosomal subunit protein bL21.